Consider the following 454-residue polypeptide: tRNA modification GTPase MnmE (454 aa).

The (6S)-5-formyl-5,6,7,8-tetrahydrofolate site is built by R23, E80, and K120. Residues 216–377 (GMKVVIAGRP…LRNHLKQSMG (162 aa)) enclose the TrmE-type G domain. N226 contacts K(+). Residues 226–231 (NAGKSS), 245–251 (TDIAGTT), 270–273 (DTAG), 335–338 (NKAD), and 358–360 (SAR) contribute to the GTP site. A Mg(2+)-binding site is contributed by S230. K(+) contacts are provided by T245, I247, and T250. T251 lines the Mg(2+) pocket. K454 lines the (6S)-5-formyl-5,6,7,8-tetrahydrofolate pocket.

It belongs to the TRAFAC class TrmE-Era-EngA-EngB-Septin-like GTPase superfamily. TrmE GTPase family. Homodimer. Heterotetramer of two MnmE and two MnmG subunits. It depends on K(+) as a cofactor.

It localises to the cytoplasm. Its function is as follows. Exhibits a very high intrinsic GTPase hydrolysis rate. Involved in the addition of a carboxymethylaminomethyl (cmnm) group at the wobble position (U34) of certain tRNAs, forming tRNA-cmnm(5)s(2)U34. This Escherichia coli O7:K1 (strain IAI39 / ExPEC) protein is tRNA modification GTPase MnmE.